A 218-amino-acid chain; its full sequence is GTP cyclohydrolase 1 (218 aa).

Positions 109, 112, and 180 each coordinate Zn(2+).

This sequence belongs to the GTP cyclohydrolase I family. In terms of assembly, toroid-shaped homodecamer, composed of two pentamers of five dimers.

The catalysed reaction is GTP + H2O = 7,8-dihydroneopterin 3'-triphosphate + formate + H(+). It functions in the pathway cofactor biosynthesis; 7,8-dihydroneopterin triphosphate biosynthesis; 7,8-dihydroneopterin triphosphate from GTP: step 1/1. This Aeromonas salmonicida (strain A449) protein is GTP cyclohydrolase 1.